A 338-amino-acid polypeptide reads, in one-letter code: Legumin B (338 aa).

The segment at 16–162 (SLNTKEDTAK…RQHSKGRKNG (147 aa)) is disordered. The span at 18-44 (NTKEDTAKRLRSPQDERGQIVKVEDGL) shows a compositional bias: basic and acidic residues. Acidic residues-rich tracts occupy residues 82–92 (DEDEDEEEEEE) and 136–150 (EEEE…EEEE). Positions 174 to 321 (ENIARPSRGD…AFGLRHSQVA (148 aa)) constitute a Cupin type-1 domain.

This sequence belongs to the 11S seed storage protein (globulins) family. Hexamer; each subunit is composed of an acidic and a basic chain derived from a single precursor and linked by a disulfide bond.

Functionally, this protein found in the seeds of many leguminous and non-leguminous plants is the source of sulfur-containing amino acids in seed meals. In Pisum sativum (Garden pea), this protein is Legumin B (LEGB).